Reading from the N-terminus, the 392-residue chain is Probable tRNA sulfurtransferase (392 aa).

A THUMP domain is found at 59–167 (ADITDRVKKV…DQAFVFSNKI (109 aa)). ATP contacts are provided by residues 184-185 (LL), 209-210 (HF), Arg-266, Gly-288, and Gln-297.

The protein belongs to the ThiI family.

It is found in the cytoplasm. The enzyme catalyses [ThiI sulfur-carrier protein]-S-sulfanyl-L-cysteine + a uridine in tRNA + 2 reduced [2Fe-2S]-[ferredoxin] + ATP + H(+) = [ThiI sulfur-carrier protein]-L-cysteine + a 4-thiouridine in tRNA + 2 oxidized [2Fe-2S]-[ferredoxin] + AMP + diphosphate. It carries out the reaction [ThiS sulfur-carrier protein]-C-terminal Gly-Gly-AMP + S-sulfanyl-L-cysteinyl-[cysteine desulfurase] + AH2 = [ThiS sulfur-carrier protein]-C-terminal-Gly-aminoethanethioate + L-cysteinyl-[cysteine desulfurase] + A + AMP + 2 H(+). Its pathway is cofactor biosynthesis; thiamine diphosphate biosynthesis. Functionally, catalyzes the ATP-dependent transfer of a sulfur to tRNA to produce 4-thiouridine in position 8 of tRNAs, which functions as a near-UV photosensor. Also catalyzes the transfer of sulfur to the sulfur carrier protein ThiS, forming ThiS-thiocarboxylate. This is a step in the synthesis of thiazole, in the thiamine biosynthesis pathway. The sulfur is donated as persulfide by IscS. The sequence is that of Probable tRNA sulfurtransferase from Alkaliphilus oremlandii (strain OhILAs) (Clostridium oremlandii (strain OhILAs)).